The chain runs to 1117 residues: Cytospin-A (1117 aa).

3 disordered regions span residues 1–176, 293–323, and 358–390; these read MKKA…NQIS, SLSP…GSVE, and SSDD…NASE. Positions 45-90 are enriched in low complexity; it reads TAASLSKTKSSDDLLAGMAGGVTVTNGVKGKKSTCPSAAPSASAPA. Over residues 93-117 the composition is skewed to polar residues; that stretch reads TVENKSKISTGTASSTKRSTSTGNK. Composition is skewed to basic and acidic residues over residues 120 to 131 and 158 to 171; these read SSTRERLRERTR and TATE…KSKS. Residues 168 to 280 are a coiled coil; sequence KSKSDNQISD…LNALGFSLEQ (113 aa). Residues 293-303 show a composition bias toward polar residues; the sequence is SLSPEITPGNQ. The segment covering 358-377 has biased composition (low complexity); it reads SSDDALDAPSSSESEGIPSI. 3 positions are modified to phosphoserine: Ser-384, Ser-385, and Ser-389. Coiled coils occupy residues 394–449 and 487–807; these read ACLT…MESL and RYME…RGRV. Residues Ser-868, Ser-881, and Ser-887 each carry the phosphoserine modification. The segment at 920–997 is disordered; the sequence is TSSASRPASL…PTTRSRIREE (78 aa). Residues 946 to 956 are compositionally biased toward basic and acidic residues; sequence RSSEEVKRDIS. The segment covering 971–990 has biased composition (low complexity); the sequence is TTSPQLSLSSSPTASVTPTT. The 106-residue stretch at 1011-1116 folds into the Calponin-homology (CH) domain; sequence GSKRNALLKW…YVTAIYKYFE (106 aa).

This sequence belongs to the cytospin-A family. As to quaternary structure, may interact with both microtubules and actin cytoskeleton.

The protein localises to the cytoplasm. It localises to the cytoskeleton. It is found in the spindle. The protein resides in the cell junction. Its subcellular location is the gap junction. Its function is as follows. Involved in cytokinesis and spindle organization. May play a role in actin cytoskeleton organization and microtubule stabilization and hence required for proper cell adhesion and migration. The sequence is that of Cytospin-A (SPECC1L) from Homo sapiens (Human).